Reading from the N-terminus, the 78-residue chain is Translational regulator CsrA (78 aa).

Belongs to the CsrA/RsmA family. In terms of assembly, homodimer; the beta-strands of each monomer intercalate to form a hydrophobic core, while the alpha-helices form wings that extend away from the core.

Its subcellular location is the cytoplasm. In terms of biological role, a translational regulator that binds mRNA to regulate translation initiation and/or mRNA stability. Usually binds in the 5'-UTR at or near the Shine-Dalgarno sequence preventing ribosome-binding, thus repressing translation. Its main target seems to be the major flagellin gene, while its function is anatagonized by FliW. The protein is Translational regulator CsrA of Borrelia recurrentis (strain A1).